Reading from the N-terminus, the 346-residue chain is MTGSTHNGGSRLIQYEDSSNKEFIRKYLVETRNEFIEKQMRALYECREIYKDDIDEVINILTYALENNDSVLLRHEVAYVIGQISNEKCNDILIKLLNDTEENLMVRHEAAEGLAAIGSDSNIEVIKKFLNDEKVEVRETCELALSSLLEKNKYAVCSCSNKDSIKEAIKKKRNDEFVSKKFNTIDPVVFTSSGNAKSVDALIEDLNNEAVPLKLRYEALFKLRDMETDVSINALGEVLIKDKKSAIFRHEVAFVLGQALHLNSLKYLISSLQNVGEHEMVRHEVALALGSLGSLNINSQEYKNVQSEIISTLKTFSKDACRVVAESCLVGLDYIAENLNMAIEVN.

5 HEAT-like PBS-type repeats span residues 71–100, 104–133, 213–242, 246–275, and 279–320; these read VLLRHEVAYVIGQISNEKCNDILIKLLNDT, LMVRHEAAEGLAAIGSDSNIEVIKKFLNDE, LKLRYEALFKLRDMETDVSINALGEVLIKD, AIFRHEVAFVLGQALHLNSLKYLISSLQNV, and EMVR…SKDA. Residues His-75, His-108, and Glu-109 each contribute to the Fe cation site. 3 residues coordinate Fe cation: His-250, His-283, and Glu-284.

Belongs to the deoxyhypusine hydroxylase family. Requires Fe(2+) as cofactor.

The enzyme catalyses [eIF5A protein]-deoxyhypusine + AH2 + O2 = [eIF5A protein]-hypusine + A + H2O. The protein operates within protein modification; eIF5A hypusination. Its function is as follows. Catalyzes the hydroxylation of the N(6)-(4-aminobutyl)-L-lysine intermediate produced by deoxyhypusine synthase/DHPS on a critical lysine of the eukaryotic translation initiation factor 5A/eIF-5A. This is the second step of the post-translational modification of that lysine into an unusual amino acid residue named hypusine. Hypusination is unique to mature eIF-5A factor and is essential for its function. This Plasmodium vivax (strain Salvador I) protein is Deoxyhypusine hydroxylase.